Reading from the N-terminus, the 1348-residue chain is Phosphoribosylformylglycinamidine synthase (1348 aa).

Residues 300-311 (GAATGAGGEIRD) and A701 each bind ATP. D702, E741, N745, and D941 together coordinate Mg(2+). S943 provides a ligand contact to ATP. Positions 1099-1348 (VAILREQGVN…MFRNARVWCG (250 aa)) constitute a Glutamine amidotransferase type-1 domain. The active-site Nucleophile is C1192. Active-site residues include H1313 and E1315.

It in the N-terminal section; belongs to the FGAMS family. In terms of assembly, monomer.

Its subcellular location is the cytoplasm. It carries out the reaction N(2)-formyl-N(1)-(5-phospho-beta-D-ribosyl)glycinamide + L-glutamine + ATP + H2O = 2-formamido-N(1)-(5-O-phospho-beta-D-ribosyl)acetamidine + L-glutamate + ADP + phosphate + H(+). The protein operates within purine metabolism; IMP biosynthesis via de novo pathway; 5-amino-1-(5-phospho-D-ribosyl)imidazole from N(2)-formyl-N(1)-(5-phospho-D-ribosyl)glycinamide: step 1/2. Functionally, phosphoribosylformylglycinamidine synthase involved in the purines biosynthetic pathway. Catalyzes the ATP-dependent conversion of formylglycinamide ribonucleotide (FGAR) and glutamine to yield formylglycinamidine ribonucleotide (FGAM) and glutamate. The chain is Phosphoribosylformylglycinamidine synthase from Xanthomonas campestris pv. campestris (strain ATCC 33913 / DSM 3586 / NCPPB 528 / LMG 568 / P 25).